Consider the following 745-residue polypeptide: Ankyrin repeat and protein kinase domain-containing protein 1 (745 aa).

Residues 34 to 301 form the Protein kinase domain; that stretch reads EEEWHLVASG…NVAVETDMLL (268 aa). ATP is bound by residues 40–48 and Lys-63; that span reads VASGGFSKV. Asp-157 (proton acceptor) is an active-site residue. ANK repeat units lie at residues 369 to 398, 402 to 431, 435 to 464, 468 to 497, 501 to 530, 534 to 563, 567 to 596, 600 to 629, 633 to 662, 666 to 695, and 699 to 728; these read NRVT…DVDC, SGYT…DTNL, DGWA…LVNA, EGWT…DLSP, EGKT…ELDA, NLRT…LPDA, SGYS…SLEL, QGWT…DLDA, MQWT…NPNA, SGWT…DIHA, and VGWT…QVDV.

Belongs to the protein kinase superfamily. TKL Ser/Thr protein kinase family.

The catalysed reaction is L-seryl-[protein] + ATP = O-phospho-L-seryl-[protein] + ADP + H(+). The enzyme catalyses L-threonyl-[protein] + ATP = O-phospho-L-threonyl-[protein] + ADP + H(+). This Mus musculus (Mouse) protein is Ankyrin repeat and protein kinase domain-containing protein 1 (Ankk1).